Reading from the N-terminus, the 115-residue chain is Large ribosomal subunit protein bL19 (115 aa).

This sequence belongs to the bacterial ribosomal protein bL19 family.

Functionally, this protein is located at the 30S-50S ribosomal subunit interface and may play a role in the structure and function of the aminoacyl-tRNA binding site. This is Large ribosomal subunit protein bL19 from Nitratidesulfovibrio vulgaris (strain DSM 19637 / Miyazaki F) (Desulfovibrio vulgaris).